The sequence spans 58 residues: MATVKVTLIKSMTGRIPNHRLCIKGLGLRRIGHTVEVLDTPENRGMINKAYYMLRVEG.

It belongs to the universal ribosomal protein uL30 family. As to quaternary structure, part of the 50S ribosomal subunit.

This chain is Large ribosomal subunit protein uL30, found in Pseudomonas savastanoi pv. phaseolicola (strain 1448A / Race 6) (Pseudomonas syringae pv. phaseolicola (strain 1448A / Race 6)).